Consider the following 111-residue polypeptide: Large ribosomal subunit protein eL31 (111 aa).

This sequence belongs to the eukaryotic ribosomal protein eL31 family.

This is Large ribosomal subunit protein eL31 (rpl31) from Dictyostelium discoideum (Social amoeba).